The primary structure comprises 402 residues: CCA-adding enzyme (402 aa).

The ATP site is built by Gly32 and Arg35. Positions 32 and 35 each coordinate CTP. Mg(2+) contacts are provided by Asp45 and Asp47. 5 residues coordinate ATP: Arg116, Asp159, Arg162, Arg165, and Arg168. CTP contacts are provided by Arg116, Asp159, Arg162, Arg165, and Arg168.

The protein belongs to the tRNA nucleotidyltransferase/poly(A) polymerase family. Bacterial CCA-adding enzyme type 3 subfamily. As to quaternary structure, homodimer. Mg(2+) serves as cofactor.

It carries out the reaction a tRNA precursor + 2 CTP + ATP = a tRNA with a 3' CCA end + 3 diphosphate. The enzyme catalyses a tRNA with a 3' CCA end + 2 CTP + ATP = a tRNA with a 3' CCACCA end + 3 diphosphate. Functionally, catalyzes the addition and repair of the essential 3'-terminal CCA sequence in tRNAs without using a nucleic acid template. Adds these three nucleotides in the order of C, C, and A to the tRNA nucleotide-73, using CTP and ATP as substrates and producing inorganic pyrophosphate. tRNA 3'-terminal CCA addition is required both for tRNA processing and repair. Also involved in tRNA surveillance by mediating tandem CCA addition to generate a CCACCA at the 3' terminus of unstable tRNAs. While stable tRNAs receive only 3'-terminal CCA, unstable tRNAs are marked with CCACCA and rapidly degraded. In Streptococcus thermophilus (strain CNRZ 1066), this protein is CCA-adding enzyme.